A 1295-amino-acid polypeptide reads, in one-letter code: Phosphoribosylformylglycinamidine synthase (1295 aa).

A disordered region spans residues 305–327; the sequence is WPGAATGSGGEIRDEGATGRGAK. Residues 307–318 and A678 contribute to the ATP site; that span reads GAATGSGGEIRD. Positions 718, 722, and 884 each coordinate Mg(2+). S886 contributes to the ATP binding site. In terms of domain architecture, Glutamine amidotransferase type-1 spans 1042–1295; the sequence is VAVLREQGVN…IFRNARKQLG (254 aa). The active-site Nucleophile is the C1135. Catalysis depends on residues H1260 and E1262.

In the N-terminal section; belongs to the FGAMS family. As to quaternary structure, monomer.

Its subcellular location is the cytoplasm. It catalyses the reaction N(2)-formyl-N(1)-(5-phospho-beta-D-ribosyl)glycinamide + L-glutamine + ATP + H2O = 2-formamido-N(1)-(5-O-phospho-beta-D-ribosyl)acetamidine + L-glutamate + ADP + phosphate + H(+). It participates in purine metabolism; IMP biosynthesis via de novo pathway; 5-amino-1-(5-phospho-D-ribosyl)imidazole from N(2)-formyl-N(1)-(5-phospho-D-ribosyl)glycinamide: step 1/2. Its function is as follows. Phosphoribosylformylglycinamidine synthase involved in the purines biosynthetic pathway. Catalyzes the ATP-dependent conversion of formylglycinamide ribonucleotide (FGAR) and glutamine to yield formylglycinamidine ribonucleotide (FGAM) and glutamate. In Escherichia coli (strain UTI89 / UPEC), this protein is Phosphoribosylformylglycinamidine synthase.